The chain runs to 97 residues: MTNSHGERRCTRYKLQKTVRERGISPVSKAIQEFEDGQMVHIDIDPSVQKGMPNPKFQGFTGKVIGQRGRSYILAVREGNSMKEVFSVPQHLKPQKY.

Belongs to the eukaryotic ribosomal protein eL21 family.

In Methanosarcina mazei (strain ATCC BAA-159 / DSM 3647 / Goe1 / Go1 / JCM 11833 / OCM 88) (Methanosarcina frisia), this protein is Large ribosomal subunit protein eL21.